We begin with the raw amino-acid sequence, 636 residues long: ATP-dependent DNA helicase YoaA (636 aa).

The Helicase ATP-binding domain occupies 10 to 272 (QLAKAIPGFK…KDTQQLQKCA (263 aa)). 45-52 (AGTGTGKT) provides a ligand contact to ATP. Cysteine 108, cysteine 168, cysteine 173, and cysteine 179 together coordinate [4Fe-4S] cluster. The DEAH box signature appears at 225–228 (DEAH).

Belongs to the helicase family. DinG subfamily. Interacts with the DNA polymerase III subunit Chi (holC), probably as a 1:1 complex. The cofactor is [4Fe-4S] cluster. Mg(2+) serves as cofactor.

It catalyses the reaction Couples ATP hydrolysis with the unwinding of duplex DNA at the replication fork by translocating in the 5'-3' direction. This creates two antiparallel DNA single strands (ssDNA). The leading ssDNA polymer is the template for DNA polymerase III holoenzyme which synthesizes a continuous strand.. The enzyme catalyses ATP + H2O = ADP + phosphate + H(+). With respect to regulation, non-hydrolyzable ATP analogs ATP-gamma-S and adenylyl-imidodiphosphate (AMP-PNP) inhibit helicase activity. DNA-dependent ATPase and 5'-3' DNA helicase. Has single-stranded (ss)DNA-dependent ATPase activity and 5'-3' helicase activity on forked DNA; both activities were measure in a YoaA:HolC (chi) complex. Requires a 20-35 nucleotide (nt) 5'-ssDNA tail; dsDNA with a 20 nt gap is also unwound. Unwinds damaged 3' nascent ends (such as those terminated by 3' azidothymidine (AZT), 3' dideoxy-C or an abasic site on the translocating strand), to promote repair and AZT excision. Without HolC the protein has much lower activity which could be due to YoaA instability or helicase stimulation by HolC. Genetically identified as involved in the repair of replication forks and tolerance of the chain-terminating nucleoside analog AZT. May act in proofreading during nucleotide misincorporation, it appears to aid in the removal of potential A-to-T transversion mutations in ndk mutants. This is ATP-dependent DNA helicase YoaA (yoaA) from Escherichia coli (strain K12).